The following is a 713-amino-acid chain: Topoisomerase subunit TopoM (713 aa).

Residues 41–504 (IPSAYDGLKP…DATPVSRGDE (464 aa)) enclose the Topo IIA-type catalytic domain. Tyr128 (O-(5'-phospho-DNA)-tyrosine intermediate) is an active-site residue. A disordered region spans residues 694–713 (NRAKASIKGSGADVTPAPAE).

It belongs to the type II topoisomerase GyrA/ParC subunit family. As to quaternary structure, a complex of TopoN and TopoM, possibly a heterotetramer. Requires Mg(2+) as cofactor.

The enzyme catalyses ATP-dependent breakage, passage and rejoining of double-stranded DNA.. With respect to regulation, inhibited by quinolone antibiotic ciprofloxacin and coumarin antibiotic novobiocin, but at much higher concentrations than is usual for DNA gyrase/topoisomerase. Its function is as follows. Catalyzes the relaxation of negatively supercoiled DNA in the presence of ATP or dATP but not other nucleotides. Individual subunits have no activity. Not able to negatively supercoil DNA, it can however introduce positive supercoils in DNA. Relaxes positive supercoils in an ATP-dependent manner. Catenates and decatenates DNA. Generates dsDNA breaks in the presence of the quinolone antibiotic ciprofloxacin, showing it is a topoisomerase. The sequence is that of Topoisomerase subunit TopoM from Mycolicibacterium smegmatis (strain ATCC 700084 / mc(2)155) (Mycobacterium smegmatis).